The following is a 277-amino-acid chain: Serine protease 33 (277 aa).

An N-terminal signal peptide occupies residues 1 to 24; sequence MRGASHLQILLLLVLGTRMQECAA. In terms of domain architecture, Peptidase S1 spans 34 to 276; that stretch reads IVGGRDAQDG…YSPWIQARLS (243 aa). A disulfide bridge connects residues cysteine 59 and cysteine 75. Residues histidine 74 and aspartate 123 each act as charge relay system in the active site. Intrachain disulfides connect cysteine 157–cysteine 234, cysteine 190–cysteine 213, and cysteine 224–cysteine 252. Serine 228 (charge relay system) is an active-site residue.

It belongs to the peptidase S1 family. Not glycosylated. As to expression, widely expressed.

Its subcellular location is the secreted. In terms of biological role, serine protease that has amidolytic activity, cleaving its substrates before Arg residues. This Mus musculus (Mouse) protein is Serine protease 33 (Prss33).